The following is a 116-amino-acid chain: Putative antiporter subunit mnhC2 (116 aa).

Transmembrane regions (helical) follow at residues 3 to 23, 28 to 48, and 72 to 92; these read LILL…ILSV, IVIG…SMGN, and AIVL…LVLV.

Belongs to the CPA3 antiporters (TC 2.A.63) subunit C family. As to quaternary structure, may form a heterooligomeric complex that consists of seven subunits: mnhA2, mnhB2, mnhC2, mnhD2, mnhE2, mnhF2 and mnhG2.

The protein localises to the cell membrane. The protein is Putative antiporter subunit mnhC2 (mnhC2) of Staphylococcus saprophyticus subsp. saprophyticus (strain ATCC 15305 / DSM 20229 / NCIMB 8711 / NCTC 7292 / S-41).